The primary structure comprises 234 residues: Large ribosomal subunit protein uL1 (234 aa).

It belongs to the universal ribosomal protein uL1 family. Part of the 50S ribosomal subunit.

Its function is as follows. Binds directly to 23S rRNA. The L1 stalk is quite mobile in the ribosome, and is involved in E site tRNA release. In terms of biological role, protein L1 is also a translational repressor protein, it controls the translation of the L11 operon by binding to its mRNA. The protein is Large ribosomal subunit protein uL1 of Desulfosudis oleivorans (strain DSM 6200 / JCM 39069 / Hxd3) (Desulfococcus oleovorans).